The chain runs to 255 residues: Coniferyl-alcohol dehydrogenase (255 aa).

Residues 12–17, aspartate 36, 51–52, and glycine 77 each bind NAD(+); these read GVSSGI and DL. Residue serine 117 coordinates substrate. NAD(+)-binding residues include tyrosine 157 and lysine 161. Tyrosine 157 serves as the catalytic Proton acceptor.

This sequence belongs to the short-chain dehydrogenases/reductases (SDR) family.

It carries out the reaction (E)-coniferol + NADP(+) = (E)-coniferaldehyde + NADPH + H(+). Its function is as follows. Catalyzes the conversion of coniferyl alcohol into coniferyl aldehyde in the eugenol degradation pathway. Specific for coniferyl alcohol; does not act on cinnamyl alcohol, 4-coumaryl alcohol or sinapyl alcohol. The sequence is that of Coniferyl-alcohol dehydrogenase (calA) from Pseudomonas sp. (strain HR199 / DSM 7063).